Here is a 465-residue protein sequence, read N- to C-terminus: Mothers against decapentaplegic homolog 1 (465 aa).

In terms of domain architecture, MH1 spans 12 to 136 (PAVKRLLGWK…YKRVESPVLP (125 aa)). The Zn(2+) site is built by Cys-64, Cys-109, Cys-121, and His-126. The interval 161-240 (QNEPHMPHNA…EDQMTHDTSQ (80 aa)) is disordered. Positions 179–210 (PNSHPFPHSPNSSYPNSPGSSSSTYPHSPASS) are enriched in low complexity. One can recognise an MH2 domain in the interval 271-465 (WCSIVYYELN…SPHNPISSVS (195 aa)). Residues Ser-463 and Ser-465 each carry the phosphoserine modification.

It belongs to the dwarfin/SMAD family. Found in a complex with SMAD4 and YY1. Interacts with HGS, NANOG and ZCCHC12. Upon C-terminus phosphorylation: forms trimers with another SMAD1 and the co-SMAD SMAD4. Interacts with PEBP2-alpha subunit, CREB-binding protein (CBP), p300, SMURF1, SMURF2, USP15 and HOXC8. Associates with ZNF423 or ZNF521 in response to BMP2 leading to activate transcription of BMP target genes. Interacts with SKOR1. Interacts (via MH2 domain) with LEMD3. Binding to LEMD3 results in at least a partial reduction of receptor-mediated phosphorylation. Forms a ternary complex with PSMB4 and OAZ1 before PSMB4 is incorporated into the 20S proteasome. Found in a macromolecular complex with FAM83G. Interacts (via MH2 domain) with FAM83G (via MH2 domain); in a SMAD4-independent manner. Interacts with ZC3H3. Interacts with TMEM119. Interacts (via MH1 and MH2 domains) with ZNF8. Interacts with RANBP3L; the interaction increases when SMAD1 is not phosphorylated and mediates SMAD1 nuclear export. Interacts with EGR1; this interaction inhibits SMAD1 dephosphorylation. Interacts with SMAD6. Interacts with YAP1. Post-translationally, phosphorylation of the C-terminal SVS motif by BMP type 1 receptor kinase activates SMAD1 by promoting dissociation from the receptor and trimerization with SMAD4. Phosphorylation by ERK2 MAP kinase in response to EGF or HGF prevents SMAD1 nuclear accumulation and transcriptional activity in response to BMP. Dephosphorylation, probably by PPM1A, induces its export from the nucleus to the cytoplasm. Dephosphorylation is inhibited by association with EGR1. Phosphorylation by CDK8/9 creates binding sites for YAP1, and subsequent phosphorylation by GSK3 switches off YAP1 binding and adds binding sites for SMURF1. In terms of processing, ubiquitinated by SMAD-specific E3 ubiquitin ligase SMURF1, leading to its degradation. Monoubiquitinated, leading to prevent DNA-binding. Deubiquitination by USP15 alleviates inhibition and promotes activation of TGF-beta target genes. Dephosphorylation, probably by PPM1A, induces its export from the nucleus to the cytoplasm. Phospho-SMAD1 is ubiquitinated by CHIP leading to disruption of the SMAD1-SMAD4 complex.

Its subcellular location is the cytoplasm. The protein localises to the nucleus. Its function is as follows. Transcriptional modulator that plays a role in various cellular processes, including embryonic development, cell differentiation, and tissue homeostasis. Upon BMP ligand binding to their receptors at the cell surface, is phosphorylated by activated type I BMP receptors (BMPRIs) and associates with SMAD4 to form an heteromeric complex which translocates into the nucleus acting as transcription factor. In turn, the hetero-trimeric complex recognizes cis-regulatory elements containing Smad Binding Elements (SBEs) to modulate the outcome of the signaling network. SMAD1/OAZ1/PSMB4 complex mediates the degradation of the CREBBP/EP300 repressor SNIP1. The polypeptide is Mothers against decapentaplegic homolog 1 (SMAD1) (Coturnix japonica (Japanese quail)).